The primary structure comprises 337 residues: Tryptophan--tRNA ligase (337 aa).

Residues 11 to 13 (QPT) and 19 to 20 (GN) each bind ATP. The 'HIGH' region motif lies at 12-20 (PTGALHLGN). Residue Asp135 participates in L-tryptophan binding. ATP-binding positions include 147–149 (GED), Val191, and 200–204 (KMSKS). The 'KMSKS' region motif lies at 200–204 (KMSKS).

Belongs to the class-I aminoacyl-tRNA synthetase family. As to quaternary structure, homodimer.

Its subcellular location is the cytoplasm. It carries out the reaction tRNA(Trp) + L-tryptophan + ATP = L-tryptophyl-tRNA(Trp) + AMP + diphosphate + H(+). In terms of biological role, catalyzes the attachment of tryptophan to tRNA(Trp). The chain is Tryptophan--tRNA ligase from Parasynechococcus marenigrum (strain WH8102).